We begin with the raw amino-acid sequence, 427 residues long: Serine--tRNA ligase (427 aa).

An L-serine-binding site is contributed by Thr230–Glu232. Residue Arg261–Glu263 coordinates ATP. Position 284 (Glu284) interacts with L-serine. Glu348–Ser351 contributes to the ATP binding site. Ser384 serves as a coordination point for L-serine.

This sequence belongs to the class-II aminoacyl-tRNA synthetase family. Type-1 seryl-tRNA synthetase subfamily. Homodimer. The tRNA molecule binds across the dimer.

It is found in the cytoplasm. The catalysed reaction is tRNA(Ser) + L-serine + ATP = L-seryl-tRNA(Ser) + AMP + diphosphate + H(+). It carries out the reaction tRNA(Sec) + L-serine + ATP = L-seryl-tRNA(Sec) + AMP + diphosphate + H(+). It functions in the pathway aminoacyl-tRNA biosynthesis; selenocysteinyl-tRNA(Sec) biosynthesis; L-seryl-tRNA(Sec) from L-serine and tRNA(Sec): step 1/1. Catalyzes the attachment of serine to tRNA(Ser). Is also able to aminoacylate tRNA(Sec) with serine, to form the misacylated tRNA L-seryl-tRNA(Sec), which will be further converted into selenocysteinyl-tRNA(Sec). This Syntrophomonas wolfei subsp. wolfei (strain DSM 2245B / Goettingen) protein is Serine--tRNA ligase.